The primary structure comprises 187 residues: GTP cyclohydrolase 1 (187 aa).

Cysteine 81, histidine 84, and cysteine 152 together coordinate Zn(2+).

The protein belongs to the GTP cyclohydrolase I family. As to quaternary structure, homomer.

It catalyses the reaction GTP + H2O = 7,8-dihydroneopterin 3'-triphosphate + formate + H(+). It participates in cofactor biosynthesis; 7,8-dihydroneopterin triphosphate biosynthesis; 7,8-dihydroneopterin triphosphate from GTP: step 1/1. The polypeptide is GTP cyclohydrolase 1 (Pyrobaculum neutrophilum (strain DSM 2338 / JCM 9278 / NBRC 100436 / V24Sta) (Thermoproteus neutrophilus)).